Reading from the N-terminus, the 356-residue chain is MRSLLLLVLISVCWADHHLSDSYTPPDQDRVIHIQAENGPRLLVEAEQAKVFSHRGGNVTLPCKFYRDPTAFGSGIHKIRIKWTKLTSDYLREVDVFVSMGYHKKTYGGYQGRVFLKGGSDNDASLVITDLTLEDYGRYKCEVIEGLEDDTAVVALELQGVVFPYFPRLGRYNLNFHEARQACLDQDAVIASFDQLYDAWRGGLDWCNAGWLSDGSVQYPITKPREPCGGQNTVPGVRNYGFWDKDKSRYDVFCFTSNFNGRFYYLIHPTKLTYDEAVQACLNDGAQIAKVGQIFAAWKLLGYDRCDAGWLADGSVRYPISRPRRRCSPTEAAVRFVGFPDKKHKLYGVYCFRAYN.

Positions Met-1–Leu-9 are excised as a propeptide. The 115-residue stretch at Pro-40–Val-154 folds into the Ig-like V-type domain. Residue Asn-58 is glycosylated (N-linked (GlcNAc...) asparagine). Cystine bridges form between Cys-63-Cys-141, Cys-183-Cys-254, Cys-207-Cys-228, Cys-281-Cys-351, and Cys-306-Cys-327. Link domains lie at Val-161 to Thr-256 and Gly-261 to Arg-353.

The protein belongs to the HAPLN family. In terms of tissue distribution, ubiquitously expressed.

Its subcellular location is the secreted. It localises to the extracellular space. It is found in the extracellular matrix. Functionally, stabilizes the aggregates of proteoglycan monomers with hyaluronic acid in the extracellular cartilage matrix. The sequence is that of Hyaluronan and proteoglycan link protein 1 (Hapln1) from Mus musculus (Mouse).